Here is an 89-residue protein sequence, read N- to C-terminus: Small ribosomal subunit protein bS20 (89 aa).

Residues 1 to 22 (MANTASARKRIRQNERRRERNV) form a disordered region. Over residues 12–22 (RQNERRRERNV) the composition is skewed to basic and acidic residues.

The protein belongs to the bacterial ribosomal protein bS20 family.

Its function is as follows. Binds directly to 16S ribosomal RNA. In Gluconobacter oxydans (strain 621H) (Gluconobacter suboxydans), this protein is Small ribosomal subunit protein bS20.